Here is a 655-residue protein sequence, read N- to C-terminus: p-hydroxybenzoic acid efflux pump subunit AaeB (655 aa).

A run of 11 helical transmembrane segments spans residues Phe-13 to Leu-33, Trp-38 to Pro-58, Leu-69 to Ile-89, Leu-93 to Val-113, Trp-121 to Leu-141, Glu-152 to Ile-172, Leu-370 to Val-390, Phe-407 to Pro-427, Gln-431 to Val-451, Met-459 to Phe-479, and Phe-482 to Leu-502.

The protein belongs to the aromatic acid exporter ArAE (TC 2.A.85) family.

It localises to the cell inner membrane. Functionally, forms an efflux pump with AaeA. Could function as a metabolic relief valve, allowing to eliminate certain compounds when they accumulate to high levels in the cell. This chain is p-hydroxybenzoic acid efflux pump subunit AaeB, found in Escherichia coli O6:K15:H31 (strain 536 / UPEC).